Here is a 198-residue protein sequence, read N- to C-terminus: MADARKNNVTIKVGMIGDSSIGKTSLMVTYVQGSFDEESTQTLGVNFMEKTISIRNTEITFSIWDLGGQREFVNMLPMVCNDAVAILFMFDLSRKSTLNSIKEWYRQARGFNKTAVPILIGTKYDHFMTFPREDQEEITKQARRYAKAMKASLVFCSTSHSINVQKIFKIVLAKVFDLKCTIPEIKNVGDPILEYIDR.

The interval 6–198 (KNNVTIKVGM…GDPILEYIDR (193 aa)) is small GTPase-like. Residues 17-24 (GDSSIGKT), 65-69 (DLGGQ), and 122-125 (TKYD) each bind GTP.

As to quaternary structure, interacts with cdc7 and cdc11.

Functionally, GTP-binding protein essential for the induction of septum formation at G2 and pre-START stages of mitosis. Acts via the cdc7 protein kinase pathway. The chain is Septum-promoting GTP-binding protein 1 (spg1) from Schizosaccharomyces pombe (strain 972 / ATCC 24843) (Fission yeast).